The primary structure comprises 602 residues: Elongation factor 4 (602 aa).

The tr-type G domain maps to 6–188; the sequence is DRIRNFCIIA…RIVRDVPPPG (183 aa). GTP is bound by residues 18–23 and 135–138; these read DHGKST and NKID.

This sequence belongs to the TRAFAC class translation factor GTPase superfamily. Classic translation factor GTPase family. LepA subfamily.

It is found in the cell membrane. The catalysed reaction is GTP + H2O = GDP + phosphate + H(+). Required for accurate and efficient protein synthesis under certain stress conditions. May act as a fidelity factor of the translation reaction, by catalyzing a one-codon backward translocation of tRNAs on improperly translocated ribosomes. Back-translocation proceeds from a post-translocation (POST) complex to a pre-translocation (PRE) complex, thus giving elongation factor G a second chance to translocate the tRNAs correctly. Binds to ribosomes in a GTP-dependent manner. This Desulforudis audaxviator (strain MP104C) protein is Elongation factor 4.